The following is a 186-amino-acid chain: Large ribosomal subunit protein uL5c (186 aa).

This sequence belongs to the universal ribosomal protein uL5 family. Part of the 50S ribosomal subunit; contacts the 5S rRNA.

The protein resides in the plastid. The protein localises to the chloroplast. Its function is as follows. Binds 5S rRNA, forms part of the central protuberance of the 50S subunit. The chain is Large ribosomal subunit protein uL5c (rpl5) from Pleurastrum terricola (Filamentous green alga).